The chain runs to 800 residues: Putative antiporter subunit mnhA2 (800 aa).

21 consecutive transmembrane segments (helical) span residues 3-23, 29-49, 78-98, 109-129, 133-153, 167-187, 202-222, 249-269, 273-293, 300-320, 337-357, 387-407, 428-448, 472-492, 527-547, 596-616, 627-647, 651-671, 676-696, 712-732, and 768-788; these read LVYL…TLFI, FAGY…LAQI, GLGL…FFYA, LPRF…IVVS, ILMY…ISYW, FIIT…LYII, SISE…GAFT, SATM…ILGL, YIYI…VTAL, GILA…VGLG, LILF…CALF, LVMT…GFLS, LTII…VYAV, PWLF…IFFI, GVNL…ILAL, IITV…VGLP, GPLE…LVFI, LTMV…FLLM, LALT…VSFS, TIKI…IFIA, and LDTM…YTLL.

This sequence belongs to the CPA3 antiporters (TC 2.A.63) subunit A family. In terms of assembly, may form a heterooligomeric complex that consists of seven subunits: mnhA2, mnhB2, mnhC2, mnhD2, mnhE2, mnhF2 and mnhG2.

It localises to the cell membrane. The polypeptide is Putative antiporter subunit mnhA2 (mnhA2) (Staphylococcus haemolyticus (strain JCSC1435)).